We begin with the raw amino-acid sequence, 398 residues long: Steroid C26-monooxygenase (398 aa).

C340 serves as a coordination point for heme.

This sequence belongs to the cytochrome P450 family. The cofactor is heme.

The catalysed reaction is cholest-4-en-3-one + 6 reduced [2Fe-2S]-[ferredoxin] + 3 O2 + 5 H(+) = (25R)-3-oxocholest-4-en-26-oate + 6 oxidized [2Fe-2S]-[ferredoxin] + 4 H2O. The enzyme catalyses cholest-4-en-3-one + 2 reduced [2Fe-2S]-[ferredoxin] + O2 + 2 H(+) = (25R)-3-oxocholest-4-en-26-ol + 2 oxidized [2Fe-2S]-[ferredoxin] + H2O. It catalyses the reaction (25R)-3-oxocholest-4-en-26-ol + 2 reduced [2Fe-2S]-[ferredoxin] + O2 + 2 H(+) = (25R)-3-oxocholest-4-en-26-al + 2 oxidized [2Fe-2S]-[ferredoxin] + 2 H2O. It carries out the reaction (25R)-3-oxocholest-4-en-26-al + 2 reduced [2Fe-2S]-[ferredoxin] + O2 + H(+) = (25R)-3-oxocholest-4-en-26-oate + 2 oxidized [2Fe-2S]-[ferredoxin] + H2O. The catalysed reaction is cholesterol + NADPH + O2 + H(+) = 26-hydroxycholesterol + NADP(+) + H2O. The enzyme catalyses 26-hydroxycholesterol + 2 reduced [2Fe-2S]-[ferredoxin] + O2 + 2 H(+) = (3beta)-hydroxy-cholest-5-en-26-al + 2 oxidized [2Fe-2S]-[ferredoxin] + 2 H2O. It catalyses the reaction (3beta)-hydroxy-cholest-5-en-26-al + NADPH + O2 = (3beta)-hydroxy-cholest-5-en-26-oate + NADP(+) + H2O. It carries out the reaction (25S)-3-oxocholest-4-en-26-ol + 2 reduced [2Fe-2S]-[ferredoxin] + O2 + 2 H(+) = (25S)-3-oxocholest-4-en-26-al + 2 oxidized [2Fe-2S]-[ferredoxin] + 2 H2O. The catalysed reaction is (25S)-3-oxocholest-4-en-26-al + 2 reduced [2Fe-2S]-[ferredoxin] + O2 + H(+) = (25S)-3-oxocholest-4-en-26-oate + 2 oxidized [2Fe-2S]-[ferredoxin] + H2O. It participates in steroid metabolism; cholesterol degradation. Its activity is regulated as follows. Inhibited by econazole, clotrimazole and miconazole. Its function is as follows. Involved in the utilization of cholesterol as the sole carbon and energy source by degrading the side chain during infection. Primarily catalyzes the sequential oxidation of the terminal methyl of cholest-4-en-3-one into (25R)-26-hydroxycholest-4-en-3-one (alcohol), (25R)-26-oxocholest-4-en-3-one (aldehyde), to finally yield the carboxylic acid (25R)-3-oxocholest-4-en-26-oate. In vitro, Cyp142 catalyzes with equal preference the oxidation of both (25R)- and (25S)-26-hydroxycholest-4-en-3-one diastereomers to the corresponding carboxylic acid which is a prerequisite for entry into the beta-oxidation pathway. Also able to sequentially oxidize cholesterol itself, not only cholest-4-en-3-one. The protein is Steroid C26-monooxygenase (cyp142) of Mycobacterium tuberculosis (strain ATCC 25618 / H37Rv).